Here is a 476-residue protein sequence, read N- to C-terminus: Aspartyl/glutamyl-tRNA(Asn/Gln) amidotransferase subunit B (476 aa).

Belongs to the GatB/GatE family. GatB subfamily. Heterotrimer of A, B and C subunits.

It carries out the reaction L-glutamyl-tRNA(Gln) + L-glutamine + ATP + H2O = L-glutaminyl-tRNA(Gln) + L-glutamate + ADP + phosphate + H(+). The catalysed reaction is L-aspartyl-tRNA(Asn) + L-glutamine + ATP + H2O = L-asparaginyl-tRNA(Asn) + L-glutamate + ADP + phosphate + 2 H(+). Allows the formation of correctly charged Asn-tRNA(Asn) or Gln-tRNA(Gln) through the transamidation of misacylated Asp-tRNA(Asn) or Glu-tRNA(Gln) in organisms which lack either or both of asparaginyl-tRNA or glutaminyl-tRNA synthetases. The reaction takes place in the presence of glutamine and ATP through an activated phospho-Asp-tRNA(Asn) or phospho-Glu-tRNA(Gln). The chain is Aspartyl/glutamyl-tRNA(Asn/Gln) amidotransferase subunit B from Bacillus cytotoxicus (strain DSM 22905 / CIP 110041 / 391-98 / NVH 391-98).